Reading from the N-terminus, the 393-residue chain is Lipid-A-disaccharide synthase (393 aa).

Belongs to the LpxB family.

The enzyme catalyses a lipid X + a UDP-2-N,3-O-bis[(3R)-3-hydroxyacyl]-alpha-D-glucosamine = a lipid A disaccharide + UDP + H(+). It functions in the pathway bacterial outer membrane biogenesis; LPS lipid A biosynthesis. In terms of biological role, condensation of UDP-2,3-diacylglucosamine and 2,3-diacylglucosamine-1-phosphate to form lipid A disaccharide, a precursor of lipid A, a phosphorylated glycolipid that anchors the lipopolysaccharide to the outer membrane of the cell. The chain is Lipid-A-disaccharide synthase from Bordetella pertussis (strain Tohama I / ATCC BAA-589 / NCTC 13251).